We begin with the raw amino-acid sequence, 235 residues long: Transcription factor MYB59 (235 aa).

2 HTH myb-type domains span residues Gln-5 to Leu-57 and His-58 to Ala-112. The segment at residues Trp-33–Leu-57 is a DNA-binding region (H-T-H motif). The short motif at Lys-62 to Lys-65 is the Bipartite nuclear localization signal 1 element. The H-T-H motif DNA-binding region spans Trp-85 to Met-108. The short motif at Arg-109–Arg-117 is the Bipartite nuclear localization signal 2 element. A disordered region spans residues Arg-109–Lys-147. Low complexity predominate over residues Met-119 to Ser-138.

In terms of tissue distribution, mainly expressed in leaves and seedlings, and to a lower extent, in roots, stems and inflorescences. Isoform MYB59-1 and isoform MYB59-2 are present in roots, leaves, and seedlings, while the expression of isoform MYB59-3 and isoform MYB59-4 is confined to seedlings.

It localises to the nucleus. Transcription factor. The protein is Transcription factor MYB59 (MYB59) of Arabidopsis thaliana (Mouse-ear cress).